Here is a 434-residue protein sequence, read N- to C-terminus: Cytochrome P450 144 (434 aa).

D124 and H128 together coordinate substrate. Positions 132, 326, 383, and 385 each coordinate heme.

This sequence belongs to the cytochrome P450 family. Monomer. The cofactor is heme.

The protein is Cytochrome P450 144 (cyp144) of Mycobacterium tuberculosis (strain CDC 1551 / Oshkosh).